The sequence spans 490 residues: Bifunctional protein HldE (490 aa).

Positions 1 to 328 (MFSFDALLQA…LRRRILPHAS (328 aa)) are ribokinase. Residue 205–208 (NRKE) participates in ATP binding. D275 is an active-site residue. Residues 358-490 (FTNGCFDILH…LVARAREGQS (133 aa)) form a cytidylyltransferase region.

It in the N-terminal section; belongs to the carbohydrate kinase PfkB family. This sequence in the C-terminal section; belongs to the cytidylyltransferase family. In terms of assembly, homodimer.

The enzyme catalyses D-glycero-beta-D-manno-heptose 7-phosphate + ATP = D-glycero-beta-D-manno-heptose 1,7-bisphosphate + ADP + H(+). It carries out the reaction D-glycero-beta-D-manno-heptose 1-phosphate + ATP + H(+) = ADP-D-glycero-beta-D-manno-heptose + diphosphate. It participates in nucleotide-sugar biosynthesis; ADP-L-glycero-beta-D-manno-heptose biosynthesis; ADP-L-glycero-beta-D-manno-heptose from D-glycero-beta-D-manno-heptose 7-phosphate: step 1/4. It functions in the pathway nucleotide-sugar biosynthesis; ADP-L-glycero-beta-D-manno-heptose biosynthesis; ADP-L-glycero-beta-D-manno-heptose from D-glycero-beta-D-manno-heptose 7-phosphate: step 3/4. Functionally, catalyzes the phosphorylation of D-glycero-D-manno-heptose 7-phosphate at the C-1 position to selectively form D-glycero-beta-D-manno-heptose-1,7-bisphosphate. Its function is as follows. Catalyzes the ADP transfer from ATP to D-glycero-beta-D-manno-heptose 1-phosphate, yielding ADP-D-glycero-beta-D-manno-heptose. In Rhodopseudomonas palustris (strain TIE-1), this protein is Bifunctional protein HldE.